The sequence spans 977 residues: Zinc finger CCCH domain-containing protein 7B (977 aa).

TPR repeat units follow at residues 1 to 27 (MERQKRKADIEKGLQFIQSTLPLKQEE), 36 to 69 (VQNLFAEGNDLFREKDYKQALVQYMEGLNVADYA), and 82 to 115 (CKLHVNRAACYFTMGLYEKALEDSEKALGLDSES). S217 carries the phosphoserine modification. Positions 248–256 (STDSLDDFS) match the LD motif; interaction with NSP3 motif. Phosphoserine occurs at positions 364 and 367. A disordered region spans residues 365–403 (FGSTRGSLDKPDSFMEETNSQDHRPPSGAQKPAPSPEPC). C3H1-type zinc fingers lie at residues 484–508 (LCKDMINKQDCKYGDNCTFAYHQEE), 616–638 (VCRHEVRYGCLREDSCHFAHSFI), and 754–782 (PQQYDLCIHAQNGRKCQYVGNCSFAHSPE). The C2H2-type zinc-finger motif lies at 842 to 866 (YHCWLCGKNSNSKKQWQQHIQSEKH). The C3H1-type 4 zinc-finger motif lies at 886–914 (MGEFRLCDRLQKGKACPDGDKCRCAHGQE).

(Microbial infection) Interacts (via LD motif) with rotavirus A NSP3 (via the coiled-coil region).

It is found in the nucleus. Functionally, may be a specific regulator of miRNA biogenesis. Binds to microRNAs MIR7-1, MIR16-2 and MIR29A hairpins recognizing the 'ATA(A/T)' motif in the apical loop. This is Zinc finger CCCH domain-containing protein 7B (ZC3H7B) from Homo sapiens (Human).